The following is a 616-amino-acid chain: Chaperone protein HscA homolog (616 aa).

The protein belongs to the heat shock protein 70 family.

Its function is as follows. Chaperone involved in the maturation of iron-sulfur cluster-containing proteins. Has a low intrinsic ATPase activity which is markedly stimulated by HscB. The chain is Chaperone protein HscA homolog from Vibrio atlanticus (strain LGP32) (Vibrio splendidus (strain Mel32)).